Consider the following 155-residue polypeptide: SsrA-binding protein (155 aa).

It belongs to the SmpB family.

Its subcellular location is the cytoplasm. Functionally, required for rescue of stalled ribosomes mediated by trans-translation. Binds to transfer-messenger RNA (tmRNA), required for stable association of tmRNA with ribosomes. tmRNA and SmpB together mimic tRNA shape, replacing the anticodon stem-loop with SmpB. tmRNA is encoded by the ssrA gene; the 2 termini fold to resemble tRNA(Ala) and it encodes a 'tag peptide', a short internal open reading frame. During trans-translation Ala-aminoacylated tmRNA acts like a tRNA, entering the A-site of stalled ribosomes, displacing the stalled mRNA. The ribosome then switches to translate the ORF on the tmRNA; the nascent peptide is terminated with the 'tag peptide' encoded by the tmRNA and targeted for degradation. The ribosome is freed to recommence translation, which seems to be the essential function of trans-translation. The sequence is that of SsrA-binding protein from Streptococcus pneumoniae (strain P1031).